A 174-amino-acid polypeptide reads, in one-letter code: Gamma-crystallin A (174 aa).

Beta/gamma crystallin 'Greek key' domains are found at residues 2–40 (GKIT…RVDS) and 41–83 (GCWM…RIIP). Positions 84–87 (HTSS) are connecting peptide. Beta/gamma crystallin 'Greek key' domains lie at 88-128 (HKLR…HVLE) and 129-171 (GCWV…RRVT).

Belongs to the beta/gamma-crystallin family. In terms of assembly, monomer.

Functionally, crystallins are the dominant structural components of the vertebrate eye lens. This is Gamma-crystallin A (CRYGA) from Homo sapiens (Human).